Here is a 930-residue protein sequence, read N- to C-terminus: Protocadherin gamma-B6 (930 aa).

The N-terminal stretch at 1–30 is a signal peptide; the sequence is MGGSCAQRRRAGPRQVLFPLLLPFFYPTLC. Cadherin domains lie at 31–133, 134–242, 243–347, 348–452, 453–562, and 570–675; these read EPIR…APQF, DKKE…PPVF, SRDE…SPEI, IITS…APVF, DQTS…APRV, and DGSA…LPDL. Topologically, residues 31–691 are extracellular; that stretch reads EPIRYSIPEE…SDPQAELQFY (661 aa). N304, N419, and N545 each carry an N-linked (GlcNAc...) asparagine glycan. A helical membrane pass occupies residues 692 to 712; that stretch reads LVVALALISVLFLLAVILAIA. Over 713–930 the chain is Cytoplasmic; the sequence is LRLRRSLSPT…KKKSGKKEKK (218 aa). Disordered regions lie at residues 791–839 and 900–930; these read PHGG…WPNN and ATLT…KEKK. A compositionally biased stretch (polar residues) spans 800–839; that stretch reads HPETLTSQAPPNTDWRFSQAQRPGTSGSQNGDDTGTWPNN. A compositionally biased stretch (basic residues) spans 920 to 930; the sequence is NKKKSGKKEKK.

Its subcellular location is the cell membrane. Functionally, potential calcium-dependent cell-adhesion protein. May be involved in the establishment and maintenance of specific neuronal connections in the brain. The polypeptide is Protocadherin gamma-B6 (PCDHGB6) (Pan troglodytes (Chimpanzee)).